A 547-amino-acid chain; its full sequence is Glucose-6-phosphate isomerase (547 aa).

The active-site Proton donor is E355. Active-site residues include H386 and K512.

The protein belongs to the GPI family.

Its subcellular location is the cytoplasm. The catalysed reaction is alpha-D-glucose 6-phosphate = beta-D-fructose 6-phosphate. The protein operates within carbohydrate biosynthesis; gluconeogenesis. It participates in carbohydrate degradation; glycolysis; D-glyceraldehyde 3-phosphate and glycerone phosphate from D-glucose: step 2/4. Functionally, catalyzes the reversible isomerization of glucose-6-phosphate to fructose-6-phosphate. In Corynebacterium diphtheriae (strain ATCC 700971 / NCTC 13129 / Biotype gravis), this protein is Glucose-6-phosphate isomerase.